The following is a 66-amino-acid chain: 14-3-3-like protein 2 (66 aa).

It belongs to the 14-3-3 family.

The protein is 14-3-3-like protein 2 of Pseudotsuga menziesii (Douglas-fir).